We begin with the raw amino-acid sequence, 343 residues long: Flap endonuclease 1 (343 aa).

An N-domain region spans residues 1 to 98 (MGVPIGDLVP…KELEKRREAR (98 aa)). Mg(2+)-binding residues include aspartate 27, aspartate 80, glutamate 152, glutamate 154, aspartate 173, aspartate 175, and aspartate 236. The interval 116–258 (EARKYAQRAT…KALEIVRYSR (143 aa)) is I-domain. An interaction with PCNA region spans residues 330-338 (RQSTLESWF).

This sequence belongs to the XPG/RAD2 endonuclease family. FEN1 subfamily. Interacts with PCNA. PCNA stimulates the nuclease activity without altering cleavage specificity. Mg(2+) is required as a cofactor.

In terms of biological role, structure-specific nuclease with 5'-flap endonuclease and 5'-3' exonuclease activities involved in DNA replication and repair. During DNA replication, cleaves the 5'-overhanging flap structure that is generated by displacement synthesis when DNA polymerase encounters the 5'-end of a downstream Okazaki fragment. Binds the unpaired 3'-DNA end and kinks the DNA to facilitate 5' cleavage specificity. Cleaves one nucleotide into the double-stranded DNA from the junction in flap DNA, leaving a nick for ligation. Also involved in the base excision repair (BER) pathway. Acts as a genome stabilization factor that prevents flaps from equilibrating into structures that lead to duplications and deletions. Also possesses 5'-3' exonuclease activity on nicked or gapped double-stranded DNA. The protein is Flap endonuclease 1 of Pyrococcus horikoshii (strain ATCC 700860 / DSM 12428 / JCM 9974 / NBRC 100139 / OT-3).